A 437-amino-acid polypeptide reads, in one-letter code: UDP-N-acetylmuramate--L-alanine ligase (437 aa).

114–120 (GTHGKTS) is an ATP binding site.

The protein belongs to the MurCDEF family.

Its subcellular location is the cytoplasm. It carries out the reaction UDP-N-acetyl-alpha-D-muramate + L-alanine + ATP = UDP-N-acetyl-alpha-D-muramoyl-L-alanine + ADP + phosphate + H(+). It functions in the pathway cell wall biogenesis; peptidoglycan biosynthesis. Cell wall formation. In Lactobacillus helveticus (strain DPC 4571), this protein is UDP-N-acetylmuramate--L-alanine ligase.